Consider the following 460-residue polypeptide: Cysteine--tRNA ligase (460 aa).

Cysteine 29 contacts Zn(2+). The short motif at 31 to 41 is the 'HIGH' region element; sequence ATPQSSPHIGH. Residues cysteine 212, histidine 237, and glutamate 241 each contribute to the Zn(2+) site. The 'KMSKS' region signature appears at 268–272; sequence KMSKS. ATP is bound at residue lysine 271.

It belongs to the class-I aminoacyl-tRNA synthetase family. As to quaternary structure, monomer. Zn(2+) is required as a cofactor.

It localises to the cytoplasm. The catalysed reaction is tRNA(Cys) + L-cysteine + ATP = L-cysteinyl-tRNA(Cys) + AMP + diphosphate. This is Cysteine--tRNA ligase from Corynebacterium glutamicum (strain R).